A 517-amino-acid chain; its full sequence is Probable bifunctional methylthioribulose-1-phosphate dehydratase/enolase-phosphatase E1 1 (517 aa).

The segment at 1 to 240 is methylthioribulose-1-phosphate dehydratase; sequence MAAAALNGLK…AIKLYQLGLD (240 aa). Cys-112 provides a ligand contact to substrate. Zn(2+)-binding residues include His-130 and His-132. Glu-155 functions as the Proton donor/acceptor; for methylthioribulose-1-phosphate dehydratase activity in the catalytic mechanism. A Zn(2+)-binding site is contributed by His-205. Residues 278–517 form an enolase-phosphatase E1 region; it reads IVLDIEGTTT…FKTITSFSDI (240 aa). Positions 281 and 283 each coordinate Mg(2+). Substrate-binding positions include 416–417 and Lys-450; that span reads SS. Asp-476 provides a ligand contact to Mg(2+).

The protein in the N-terminal section; belongs to the aldolase class II family. MtnB subfamily. In the C-terminal section; belongs to the HAD-like hydrolase superfamily. MasA/MtnC family. Requires Zn(2+) as cofactor. Mg(2+) is required as a cofactor.

It carries out the reaction 5-(methylsulfanyl)-D-ribulose 1-phosphate = 5-methylsulfanyl-2,3-dioxopentyl phosphate + H2O. The catalysed reaction is 5-methylsulfanyl-2,3-dioxopentyl phosphate + H2O = 1,2-dihydroxy-5-(methylsulfanyl)pent-1-en-3-one + phosphate. The protein operates within amino-acid biosynthesis; L-methionine biosynthesis via salvage pathway; L-methionine from S-methyl-5-thio-alpha-D-ribose 1-phosphate: step 2/6. It participates in amino-acid biosynthesis; L-methionine biosynthesis via salvage pathway; L-methionine from S-methyl-5-thio-alpha-D-ribose 1-phosphate: step 3/6. It functions in the pathway amino-acid biosynthesis; L-methionine biosynthesis via salvage pathway; L-methionine from S-methyl-5-thio-alpha-D-ribose 1-phosphate: step 4/6. The protein is Probable bifunctional methylthioribulose-1-phosphate dehydratase/enolase-phosphatase E1 1 of Vitis vinifera (Grape).